A 432-amino-acid chain; its full sequence is D-amino acid dehydrogenase (432 aa).

3-17 lines the FAD pocket; the sequence is VVILGSGVVGVASAW.

Belongs to the DadA oxidoreductase family. It depends on FAD as a cofactor.

The enzyme catalyses a D-alpha-amino acid + A + H2O = a 2-oxocarboxylate + AH2 + NH4(+). The protein operates within amino-acid degradation; D-alanine degradation; NH(3) and pyruvate from D-alanine: step 1/1. In terms of biological role, oxidative deamination of D-amino acids. This Escherichia coli O45:K1 (strain S88 / ExPEC) protein is D-amino acid dehydrogenase.